Reading from the N-terminus, the 3097-residue chain is Neural-cadherin (3097 aa).

The signal sequence occupies residues 1–36; that stretch reads MAARRCLNQLRQRYITNRFNICTCAIFLISLPFILA. N-linked (GlcNAc...) asparagine glycans are attached at residues N97 and N150. A Cadherin 1 domain is found at 181–305; sequence VRENQPAGTR…LDENDNRPIF (125 aa). Residues N325 and N426 are each glycosylated (N-linked (GlcNAc...) asparagine). 15 Cadherin domains span residues 430 to 543, 554 to 651, 660 to 756, 766 to 858, 867 to 968, 978 to 1078, 1087 to 1183, 1193 to 1299, 1307 to 1414, 1423 to 1514, 1523 to 1630, 1639 to 1742, 1749 to 1861, 1870 to 1966, and 1974 to 2085; these read HREK…PPYF, VQLN…APQF, IPEN…APKF, VDED…EPKF, VDEN…KPVF, VEEG…PPLF, VKQD…PPVW, VKEN…IPLF, VLEG…PPYF, VDEN…PPVF, ITEE…APIF, VTEN…PPQF, TEVD…KPHF, VFED…APKF, and LPEH…QPGS. N930 carries N-linked (GlcNAc...) asparagine glycosylation. A glycan (N-linked (GlcNAc...) asparagine) is linked at N1266. 11 disulfide bridges follow: C2346-C2357, C2351-C2366, C2368-C2377, C2559-C2585, C2592-C2607, C2601-C2616, C2618-C2627, C2787-C2822, C2869-C2880, C2874-C2891, and C2893-C2902. The EGF-like 1 domain maps to 2346–2377; the sequence is CRTTPCHNGGRCVDTRFGPHCSCPVGYTGPRC. Positions 2379–2585 constitute a Laminin G-like 1 domain; sequence QTTRSFRGNG…GLSRNSVAGC (207 aa). Positions 2592 to 2627 constitute an EGF-like 2 domain; the sequence is CAQTETTARCWEHGNCVGSLSEARCHCRPGWTGPAC. The Laminin G-like 2 domain occupies 2631 to 2822; sequence TIPTTFKAQS…TMARNLEKGC (192 aa). The 34-residue stretch at 2869–2902 folds into the EGF-like 3 domain; sequence CLDMPCMNGATCINLEPRLRYRCICPDGFWGENC. Residues 2917–2937 form a helical membrane-spanning segment; it reads ALAAILVCLLIILILVLVFVV. Topologically, residues 2938–3097 are cytoplasmic; that stretch reads YNRRREAHIK…PNPHNTELEL (160 aa).

In terms of tissue distribution, in the embryo, the protein first appears in the mesoderm at stage 9 and is present in the myoblasts and muscle fibers by stage 12 and stage 14, respectively. At stage 12 the protein is also located in the axons of the entire CNS, but not in the glial cells. In third instar larvae protein is expressed in the CNS neuropile, photoreceptor axons and precursors of adult muscles.

The protein localises to the cell membrane. Functionally, cadherins are calcium-dependent cell adhesion proteins. They preferentially interact with themselves in a homophilic manner in connecting cells; cadherins may thus contribute to the sorting of heterogeneous cell types. May associate with arm neural isoform and participate in the transmission of developmental information. This is Neural-cadherin (CadN) from Drosophila melanogaster (Fruit fly).